A 394-amino-acid chain; its full sequence is Flap endonuclease 1 (394 aa).

The interval 1–104 (MGIKQLFTII…GELARRYQRK (104 aa)) is N-domain. Position 34 (aspartate 34) interacts with Mg(2+). Residues arginine 47 and arginine 70 each contribute to the DNA site. Mg(2+) is bound by residues aspartate 86, glutamate 158, glutamate 160, aspartate 179, and aspartate 181. The interval 122–253 (DVEKFSRRTV…STALKLIREH (132 aa)) is I-domain. DNA is bound at residue glutamate 158. DNA is bound by residues glycine 231 and aspartate 233. Aspartate 233 is a Mg(2+) binding site. Residues 340-348 (QQQRLEGFF) form an interaction with PCNA region. A disordered region spans residues 358–394 (QKAHKRKLEVKAEEAKKKLKAEKKEKAKAKARPRGTA). The span at 374–394 (KKLKAEKKEKAKAKARPRGTA) shows a compositional bias: basic residues.

Belongs to the XPG/RAD2 endonuclease family. FEN1 subfamily. Interacts with PCNA. Three molecules of FEN1 bind to one PCNA trimer with each molecule binding to one PCNA monomer. PCNA stimulates the nuclease activity without altering cleavage specificity. The cofactor is Mg(2+). Post-translationally, phosphorylated. Phosphorylation upon DNA damage induces relocalization to the nuclear plasma.

Its subcellular location is the nucleus. It is found in the nucleolus. It localises to the nucleoplasm. The protein resides in the mitochondrion. Functionally, structure-specific nuclease with 5'-flap endonuclease and 5'-3' exonuclease activities involved in DNA replication and repair. During DNA replication, cleaves the 5'-overhanging flap structure that is generated by displacement synthesis when DNA polymerase encounters the 5'-end of a downstream Okazaki fragment. It enters the flap from the 5'-end and then tracks to cleave the flap base, leaving a nick for ligation. Also involved in the long patch base excision repair (LP-BER) pathway, by cleaving within the apurinic/apyrimidinic (AP) site-terminated flap. Acts as a genome stabilization factor that prevents flaps from equilibrating into structures that lead to duplications and deletions. Also possesses 5'-3' exonuclease activity on nicked or gapped double-stranded DNA, and exhibits RNase H activity. Also involved in replication and repair of rDNA and in repairing mitochondrial DNA. This Pyricularia oryzae (strain 70-15 / ATCC MYA-4617 / FGSC 8958) (Rice blast fungus) protein is Flap endonuclease 1.